Reading from the N-terminus, the 279-residue chain is MMTQMKTSSDEMKVAIIANGKPQSRRVASKLFNAFRDDPDFYLTKKNPDVLISIGGDGMLLSAFHMYEKELARVRFVGIHTGHLGFYTDYLDSEVDQLIETLRKDSGAKISYPLLNVKLTLADGRSFTSIALNEAAIKRNEKTMAADVCLNDVLFESFRGDGLSVSTPTGSTAYNKSLGGAVLHPTIEALQLTEIASLNNRVYRTLGSPLIVPKHEKITVYPTRMGSYTLSVDNKTYINRNVKKVEFSIDQRKISFVASASHTSFWERVRESFIGDMEE.

Catalysis depends on Asp-57, which acts as the Proton acceptor. NAD(+)-binding positions include 57–58, 133–134, Arg-159, Asp-161, 172–177, and Ala-196; these read DG, NE, and TAYNKS.

The protein belongs to the NAD kinase family. Requires a divalent metal cation as cofactor.

It is found in the cytoplasm. The catalysed reaction is NAD(+) + ATP = ADP + NADP(+) + H(+). In terms of biological role, involved in the regulation of the intracellular balance of NAD and NADP, and is a key enzyme in the biosynthesis of NADP. Catalyzes specifically the phosphorylation on 2'-hydroxyl of the adenosine moiety of NAD to yield NADP. This is NAD kinase from Streptococcus thermophilus (strain CNRZ 1066).